Here is a 990-residue protein sequence, read N- to C-terminus: MASSKNMPSRITQKSMEPPLRETWQQVVQEMVMRKQRDEEEKQNLVTGKEKSWVSIDLLGTKQEGKRQKVNIWGPWEKWGIKIVWVMLWVIQLMLWGCLIWEMGKKHSCNAEEVIALVDDPGGFQKVKYVESVPVTCMTKNFTQWGCQPEGAYPDPDLEYRNISQDILEQVYKQEWPWNTYHWPLWQMENMRQWMKENEKEYTSRNNKTKEDIDALLAGKIRGRFCVPYPFALLKCEEWCWYPANINQETGHAQQIKINCTKAKAVSCTEQMPLAAVQRVYWEKEDEEGMKFMNIQACNESQLRCKTSPGGCVQGYPIPVGAEIIPESMKYLRGKKSPYGGIKDKNGELKLPLSVRVWVRMANLSGWVNGTPPYWSARIKGSTGINGTRWYGIGTLHHLGYNISSNPEKGLCNFTKELWIGGDRFQYQYKPSWNCSQNWTGYPVWHVFRYLDMTEHMTSRCVQRPLRHNITVGNGTITGNCSVTDWEGCNCTRSGNYLYNSTTGGLLVIICRQNSTITGIMGTNTNWTTMWGIYKNCSECKNSTLDRTDNGTLGTVNNINCSLPHYNESNKWTCAARNSKKKRDSLYIAGRDFWGRVKALYSCESNLGGLDGMMHQQMVLQKYQVIKVRAYTYGVVDMPKAYREKNMRNKRSTEISRPRKKRGIGLVIVLAIMAIIAAAGAGLGVANAVQQSYTRTAVQSLANATAAQQNVLEATYAMVQHVAKGVRILEARVARVEAIVDRMMLYHELDCWHYQHYCVTSTRTEVAQYVNWTRYKDNCTWQQWEEEIEQHEANLSLLLKEAALQVQIAQRDAQRIPDVWKALQEAFDWSGWFSWLKYIPWIVVCIVGVICFRLLMCVITMCLQAYRQVREIRYTRVTVVIEAPVDLEEKQREERDGSSGSENLEHEKRTSPRSFIQIWRATVQAWKTSPWGKGWKKILYMTLLPLLTLQIWMEETGWNGDKRCKKKKERVDCQDRESMPAIENEYVELS.

Residues 1–107 (MASSKNMPSR…CLIWEMGKKH (107 aa)) form the signal peptide. Residues 108–838 (SCNAEEVIAL…WSGWFSWLKY (731 aa)) lie on the Extracellular side of the membrane. 23 N-linked (GlcNAc...) asparagine; by host glycosylation sites follow: N141, N162, N207, N259, N299, N363, N386, N402, N413, N434, N438, N469, N474, N480, N490, N500, N514, N526, N536, N542, N550, N560, and N567. The tract at residues 663-683 (GIGLVIVLAIMAIIAAAGAGL) is fusion peptide. The stretch at 695–745 (RTAVQSLANATAAQQNVLEATYAMVQHVAKGVRILEARVARVEAIVDRMML) forms a coiled coil. Residue N703 is glycosylated (N-linked (GlcNAc...) asparagine; by host). Residues 729–745 (LEARVARVEAIVDRMML) are immunosuppression. Residues N771, N778, and N794 are each glycosylated (N-linked (GlcNAc...) asparagine; by host). A coiled-coil region spans residues 786-821 (EEIEQHEANLSLLLKEAALQVQIAQRDAQRIPDVWK). The helical transmembrane segment at 839 to 859 (IPWIVVCIVGVICFRLLMCVI) threads the bilayer. Residues 860–990 (TMCLQAYRQV…AIENEYVELS (131 aa)) are Cytoplasmic-facing. A lipid anchor (S-palmitoyl cysteine; by host) is attached at C862. Residues 890 to 909 (KQREERDGSSGSENLEHEKR) form a disordered region.

The mature envelope protein (Env) consists of a trimer of SU-TM heterodimers attached by noncovalent interactions or by a labile interchain disulfide bond. Specific enzymatic cleavages in vivo yield mature proteins. Envelope glycoproteins are synthesized as an inactive precursor that is N-glycosylated and processed likely by host cell furin or by a furin-like protease in the Golgi to yield the mature SU and TM proteins. The cleavage site between SU and TM requires the minimal sequence [KR]-X-[KR]-R. Post-translationally, the transmembrane protein is palmitoylated.

Its subcellular location is the virion membrane. The protein localises to the host cell membrane. Its function is as follows. The surface protein (SU) attaches the virus to the host cell by binding to its receptor. This interaction triggers the refolding of the transmembrane protein (TM) and is thought to activate its fusogenic potential by unmasking its fusion peptide. Fusion occurs at the host cell plasma membrane. The transmembrane protein (TM) acts as a class I viral fusion protein. Under the current model, the protein has at least 3 conformational states: pre-fusion native state, pre-hairpin intermediate state, and post-fusion hairpin state. During viral and target cell membrane fusion, the coiled coil regions (heptad repeats) assume a trimer-of-hairpins structure, positioning the fusion peptide in close proximity to the C-terminal region of the ectodomain. The formation of this structure appears to drive apposition and subsequent fusion of viral and target cell membranes. Membranes fusion leads to delivery of the nucleocapsid into the cytoplasm. This is Envelope glycoprotein gp160 (env) from Ovine maedi visna related virus (strain South Africa) (SA-OMVV).